The chain runs to 35 residues: Apolipophorin-3 (35 aa).

As to quaternary structure, equilibrium between a soluble monomer and a bound lipoprotein form. Apolipophorin-3 associates with lipophorin during lipid loading until each particle contains 9 or 14 molecules of apolipophorin-3. Hemolymph.

It is found in the secreted. Functionally, assists in the loading of diacylglycerol, generated from triacylglycerol stores in the fat body through the action of adipokinetic hormone, into lipophorin, the hemolymph lipoprotein. It increases the lipid carrying capacity of lipophorin by covering the expanding hydrophobic surface resulting from diacylglycerol uptake. It thus plays a critical role in the transport of lipids during flight in several species of insects. Has hemagglutinating activity towards rabbit erythrocytes. The protein is Apolipophorin-3 of Heliothis virescens (Tobacco budworm moth).